Here is a 149-residue protein sequence, read N- to C-terminus: uncharacterized protein (149 aa).

Over residues 1 to 11 (MTKESKPDRLR) the composition is skewed to basic and acidic residues. Residues 1-20 (MTKESKPDRLRQMGALNPKP) are disordered.

This is an uncharacterized protein from Sinorhizobium fredii (strain NBRC 101917 / NGR234).